The chain runs to 124 residues: MKKTKKRKQSITLVEMMVVITLIGIIGGALAFNMRGSLQKGKIFQTEQNCARVYDVLMMEYASGNLSLKEVIANKEAILEDSAWCKEGKKLLKDAWGEDLLVKMNDKGDDIVVFSKKVRNEQRG.

Positions 1 to 31 are cleaved as a signal peptide; that stretch reads MKKTKKRKQSITLVEMMVVITLIGIIGGALA.

The protein localises to the cell outer membrane. The sequence is that of Putative outer membrane protein CT_569 from Chlamydia trachomatis serovar D (strain ATCC VR-885 / DSM 19411 / UW-3/Cx).